The sequence spans 925 residues: Collagen alpha-2(I) chain (925 aa).

Positions 1–925 (SGGFDFSFLP…FGYEGDFYRA (925 aa)) are disordered. 2 positions are modified to 4-hydroxyproline: Pro-10 and Pro-13. The span at 22–34 (RYYGVGLGPGPMG) shows a compositional bias: gly residues. Residues 35–74 (LMGPRGPPGASGAPGPQGFQGPAGEPGEPGQTGPAGARGP) are compositionally biased toward low complexity. 2 positions are modified to 4-hydroxyproline: Pro-42 and Pro-48. Lys-103 carries the 5-hydroxylysine; alternate modification. Lys-103 carries an O-linked (Gal...) hydroxylysine; alternate glycan. Residues 154–171 (DGSVGPVGPAGPIGSAGP) show a composition bias toward low complexity. The segment covering 271–280 (GESGGKGEPG) has biased composition (gly residues). Residues 281–291 (SAGPQGPPGSS) are compositionally biased toward low complexity. Over residues 306 to 315 (GLRGGPGSRG) the composition is skewed to gly residues. A 4-hydroxyproline mark is found at Pro-317, Pro-332, and Pro-335. Over residues 363–379 (IDGRPGPIGPAGARGEA) the composition is skewed to low complexity. The segment covering 423 to 432 (GVQGGKGEQG) has biased composition (gly residues). 2 stretches are compositionally biased toward low complexity: residues 479 to 496 (PGES…SRGP) and 508 to 518 (EPGVVGAPGTA). The span at 519–528 (GPAGSGGLPG) shows a compositional bias: gly residues. 2 stretches are compositionally biased toward low complexity: residues 551 to 595 (VGTT…PRGS) and 602 to 622 (VGPA…QPGA). A compositionally biased stretch (basic and acidic residues) spans 623-632 (KGERGTKGPK). Over residues 640-650 (PTGPVGSAGPA) the composition is skewed to low complexity. Gly residues predominate over residues 660-669 (GSRGDGGPPG). Low complexity predominate over residues 671–680 (TGFPGAAGRT). A compositionally biased stretch (gly residues) spans 696 to 718 (GAAGKGDQGPVGRGETGAGGPPG). Composition is skewed to low complexity over residues 719–753 (FTGE…LGLP) and 761–771 (LPGVAGAVGEP). Residues 772–782 (GPLGIGPPGAR) are compositionally biased toward gly residues. Low complexity predominate over residues 791–806 (EPGPVGSVGPVGALGP). Over residues 816-827 (RGDKGEPGEKGP) the composition is skewed to basic and acidic residues. Over residues 897–907 (PAGPPGPPGPP) the composition is skewed to pro residues.

Belongs to the fibrillar collagen family. As to quaternary structure, trimers of one alpha 2(I) and two alpha 1(I) chains. Interacts (via C-terminus) with TMEM131 (via PapD-L domain); the interaction is direct and is involved in assembly and TRAPPIII ER-to-Golgi transport complex-dependent secretion of collagen. Prolines at the third position of the tripeptide repeating unit (G-X-Y) are hydroxylated in some or all of the chains. Expressed in bones.

It is found in the secreted. The protein localises to the extracellular space. Its subcellular location is the extracellular matrix. In terms of biological role, type I collagen is a member of group I collagen (fibrillar forming collagen). The sequence is that of Collagen alpha-2(I) chain from Acratocnus sp. (strain SLP-2019) (Ground sloth).